We begin with the raw amino-acid sequence, 970 residues long: Pentatricopeptide repeat-containing protein At1g18485 (970 aa).

PPR repeat units follow at residues 119 to 149, 150 to 185, 186 to 220, 221 to 251, 252 to 282, 291 to 325, 326 to 356, 357 to 391, 394 to 428, 429 to 459, 460 to 494, 495 to 529, 530 to 560, 561 to 595, 597 to 630, 631 to 661, 662 to 696, 697 to 727, and 733 to 764; these read DDVL…LRSK, NLFQ…DLLP, DHFT…GLVE, DVFV…MPER, NLVS…MMEE, DVAT…RLDK, ELVL…NNNK, NVVS…GEDV, DEVT…EFVY, NELV…IRSK, TVNS…GLLP, DSFT…WLER, DLFV…MEDK, SLVS…GIQL, GISM…LLED, DAFI…LKEK, STAS…GHNP, DDLT…MKSS, and NLKH…MSEE. Residues 770 to 845 form a type E motif region; that stretch reads WKSLLSSCRI…AGCSWIELNR (76 aa). The tract at residues 846-875 is type E(+) motif; sequence KVFSFVVGERFLDGFEEIKSLWSILEMKIS. Positions 876 to 970 are type DYW motif; that stretch reads KMGYRPDTMS…NGVCSCGDYW (95 aa).

The protein belongs to the PPR family. PCMP-H subfamily.

The polypeptide is Pentatricopeptide repeat-containing protein At1g18485 (PCMP-H8) (Arabidopsis thaliana (Mouse-ear cress)).